Here is a 362-residue protein sequence, read N- to C-terminus: N-acylethanolamine-hydrolyzing acid amidase (362 aa).

The signal sequence occupies residues 1 to 33 (MGTLATRAACHGAHLALALLLLLSLSGPWLSAV). 2 N-linked (GlcNAc...) asparagine glycosylation sites follow: N42 and N112. The active-site Nucleophile is the C131. N-linked (GlcNAc...) asparagine glycans are attached at residues N314 and N338.

This sequence belongs to the acid ceramidase family. In terms of assembly, heterodimer of an alpha and a beta subunit, produced by autocatalytic cleavage. N-glycosylated. Tunicamycin treatment causes a reduction in specific activity against N-palmitoylethanolamine. Post-translationally, autoproteolytic cleavage at pH 4.5 gives rise to the alpha and beta subunit. Cleavage gives rise to a conformation change that activates the enzyme. The same catalytic Cys residue mediates the autoproteolytic cleavage and subsequent hydrolysis of lipid substrates.

The protein resides in the lysosome. It localises to the membrane. The catalysed reaction is N-hexadecanoylethanolamine + H2O = ethanolamine + hexadecanoate. The enzyme catalyses an N-(long-chain fatty acyl)ethanolamine + H2O = a long-chain fatty acid + ethanolamine. It catalyses the reaction N-dodecanoylethanolamine + H2O = dodecanoate + ethanolamine. It carries out the reaction N-tetradecanoylethanolamine + H2O = tetradecanoate + ethanolamine. The catalysed reaction is an N-acylsphing-4-enine + H2O = sphing-4-enine + a fatty acid. The enzyme catalyses N-hexadecanoylsphing-4-enine + H2O = sphing-4-enine + hexadecanoate. It catalyses the reaction N-dodecanoylsphing-4-enine + H2O = dodecanoate + sphing-4-enine. It functions in the pathway lipid metabolism; fatty acid metabolism. In terms of biological role, degrades bioactive fatty acid amides to their corresponding acids, with the following preference: N-palmitoylethanolamine &gt; N-myristoylethanolamine &gt; N-stearoylethanolamine &gt; N-oleoylethanolamine &gt; N-linoleoylethanolamine &gt; N-arachidonoylethanolamine. This chain is N-acylethanolamine-hydrolyzing acid amidase, found in Mus musculus (Mouse).